A 475-amino-acid polypeptide reads, in one-letter code: UDP-N-acetylmuramate--L-alanine ligase (475 aa).

ATP is bound at residue 112–118 (GTHGKTT).

The protein belongs to the MurCDEF family.

The protein resides in the cytoplasm. The catalysed reaction is UDP-N-acetyl-alpha-D-muramate + L-alanine + ATP = UDP-N-acetyl-alpha-D-muramoyl-L-alanine + ADP + phosphate + H(+). Its pathway is cell wall biogenesis; peptidoglycan biosynthesis. Cell wall formation. The sequence is that of UDP-N-acetylmuramate--L-alanine ligase from Methylobacillus flagellatus (strain ATCC 51484 / DSM 6875 / VKM B-1610 / KT).